We begin with the raw amino-acid sequence, 596 residues long: Membrane protein insertase YidC (596 aa).

6 consecutive transmembrane segments (helical) span residues 4–24 (NKLIGLILISILLIVYTHFFD), 332–352 (LGWPIVKWINLYLIIPIFSFI), 359–379 (YGLVILILVIFIKLLLLPLSY), 425–445 (LSGCIPVLLQMPILLAMFNFF), 468–488 (IINLPFQIPFYGSHVSLFTLL), and 518–538 (PITFMFILNSFPAGLSFYYFV). Basic and acidic residues predominate over residues 565-584 (KNKEKSANNKEGSFKKRFQD). A disordered region spans residues 565 to 596 (KNKEKSANNKEGSFKKRFQDAIKASASHKGKK).

The protein belongs to the OXA1/ALB3/YidC family. Type 1 subfamily. Interacts with the Sec translocase complex via SecD. Specifically interacts with transmembrane segments of nascent integral membrane proteins during membrane integration.

The protein resides in the cell inner membrane. Its function is as follows. Required for the insertion and/or proper folding and/or complex formation of integral membrane proteins into the membrane. Involved in integration of membrane proteins that insert both dependently and independently of the Sec translocase complex, as well as at least some lipoproteins. Aids folding of multispanning membrane proteins. The protein is Membrane protein insertase YidC of Amoebophilus asiaticus (strain 5a2).